We begin with the raw amino-acid sequence, 747 residues long: Endopolyphosphatase (747 aa).

Methionine 1 is a topological domain (cytoplasmic). The helical; Signal-anchor for type II membrane protein transmembrane segment at 2 to 22 threads the bilayer; sequence LPKTLTIWASLASLAVAQSGQ. At 23–747 the chain is on the vacuolar side; the sequence is VVFAKNADGK…AEYLEEPDDD (725 aa). 3 N-linked (GlcNAc...) asparagine glycosylation sites follow: asparagine 134, asparagine 191, and asparagine 463. Residues 570 to 640 form a disordered region; it reads AVATSSEPES…PKFPKDLQPG (71 aa). Positions 577 to 586 are enriched in acidic residues; the sequence is PESDDYDSDL. Residues 591-625 show a composition bias toward basic residues; that stretch reads KKGKKKGKKGKKGKKGKKGKKKKGKKGKKGKKGKR. Over residues 626-635 the composition is skewed to basic and acidic residues; sequence DKSMPPKFPK. An N-linked (GlcNAc...) asparagine glycan is attached at asparagine 659.

It belongs to the endopolyphosphatase PPN1 family. A divalent metal cation is required as a cofactor. Post-translationally, processing by proteases in the vacuole may be required for activation.

The protein localises to the vacuole membrane. The enzyme catalyses [phosphate](n+1) + n H2O = (n+1) phosphate + n H(+). Its function is as follows. Catalyzes the hydrolysis of inorganic polyphosphate (polyP) chains of many hundreds of phosphate residues into shorter lengths. The sequence is that of Endopolyphosphatase (PPN1) from Yarrowia lipolytica (strain CLIB 122 / E 150) (Yeast).